The chain runs to 279 residues: L-ascorbate peroxidase 5, peroxisomal (279 aa).

The active-site Proton acceptor is H39. Residues 111 to 134 (PFTPGRKDADSADDGELPNPNEGA) are disordered. H158 lines the heme b pocket. K(+)-binding residues include T159, T175, and D182. Residues 251-271 (AVTQQTLGIAVAAAVVIFTIC) traverse the membrane as a helical segment. The short motif at 272 to 279 (YEASRRGK) is the AKR2A-binding sequence (ABS) required for peroxisome membrane targeting element.

This sequence belongs to the peroxidase family. Ascorbate peroxidase subfamily. In terms of assembly, interacts with AKR2A and AKR2B. It depends on heme b as a cofactor.

The protein resides in the peroxisome membrane. The catalysed reaction is L-ascorbate + H2O2 = L-dehydroascorbate + 2 H2O. Functionally, plays a key role in hydrogen peroxide removal. This chain is L-ascorbate peroxidase 5, peroxisomal (APX5), found in Arabidopsis thaliana (Mouse-ear cress).